The following is a 253-amino-acid chain: uncharacterized protein (253 aa).

This sequence belongs to the A.longa ORF167/ORF288 family.

It is found in the plastid. This is an uncharacterized protein from Euglena longa (Euglenophycean alga).